A 394-amino-acid chain; its full sequence is NAD(P)H-quinone oxidoreductase subunit H (394 aa).

It belongs to the complex I 49 kDa subunit family. In terms of assembly, NDH-1 can be composed of about 15 different subunits; different subcomplexes with different compositions have been identified which probably have different functions.

Its subcellular location is the cellular thylakoid membrane. It catalyses the reaction a plastoquinone + NADH + (n+1) H(+)(in) = a plastoquinol + NAD(+) + n H(+)(out). It carries out the reaction a plastoquinone + NADPH + (n+1) H(+)(in) = a plastoquinol + NADP(+) + n H(+)(out). NDH-1 shuttles electrons from an unknown electron donor, via FMN and iron-sulfur (Fe-S) centers, to quinones in the respiratory and/or the photosynthetic chain. The immediate electron acceptor for the enzyme in this species is believed to be plastoquinone. Couples the redox reaction to proton translocation, and thus conserves the redox energy in a proton gradient. Cyanobacterial NDH-1 also plays a role in inorganic carbon-concentration. The sequence is that of NAD(P)H-quinone oxidoreductase subunit H from Thermosynechococcus vestitus (strain NIES-2133 / IAM M-273 / BP-1).